Here is a 740-residue protein sequence, read N- to C-terminus: Folic acid synthesis protein fol1 (740 aa).

DHNA regions lie at residues 39–160 (DLIH…REID) and 161–280 (DQFF…SCFS). Positions 291 to 449 (IDNEAVYISL…EKIVDHDIKP (159 aa)) are HPPK. The 260-residue stretch at 471 to 730 (TYIMAILNLT…DVYEMYKISK (260 aa)) folds into the Pterin-binding domain. The segment at 473–740 (IMAILNLTPD…MSDAIWKEIY (268 aa)) is DHPS. Asparagine 478 contributes to the Mg(2+) binding site. Residues threonine 517, aspartate 552, asparagine 571, aspartate 643, lysine 683, and 718–720 (RVH) contribute to the (7,8-dihydropterin-6-yl)methyl diphosphate site.

It in the N-terminal section; belongs to the DHNA family. This sequence in the central section; belongs to the HPPK family. In the C-terminal section; belongs to the DHPS family. It depends on Mg(2+) as a cofactor.

The enzyme catalyses 7,8-dihydroneopterin = 6-hydroxymethyl-7,8-dihydropterin + glycolaldehyde. The catalysed reaction is 6-hydroxymethyl-7,8-dihydropterin + ATP = (7,8-dihydropterin-6-yl)methyl diphosphate + AMP + H(+). It carries out the reaction (7,8-dihydropterin-6-yl)methyl diphosphate + 4-aminobenzoate = 7,8-dihydropteroate + diphosphate. Its pathway is cofactor biosynthesis; tetrahydrofolate biosynthesis; 2-amino-4-hydroxy-6-hydroxymethyl-7,8-dihydropteridine diphosphate from 7,8-dihydroneopterin triphosphate: step 3/4. It functions in the pathway cofactor biosynthesis; tetrahydrofolate biosynthesis; 2-amino-4-hydroxy-6-hydroxymethyl-7,8-dihydropteridine diphosphate from 7,8-dihydroneopterin triphosphate: step 4/4. It participates in cofactor biosynthesis; tetrahydrofolate biosynthesis; 7,8-dihydrofolate from 2-amino-4-hydroxy-6-hydroxymethyl-7,8-dihydropteridine diphosphate and 4-aminobenzoate: step 1/2. Functionally, catalyzes three sequential steps of tetrahydrofolate biosynthesis. This chain is Folic acid synthesis protein fol1 (fol1), found in Pneumocystis carinii.